The chain runs to 198 residues: Ribosome maturation factor RimP (198 aa).

This sequence belongs to the RimP family.

The protein localises to the cytoplasm. Required for maturation of 30S ribosomal subunits. The chain is Ribosome maturation factor RimP from Rhizobium rhizogenes (strain K84 / ATCC BAA-868) (Agrobacterium radiobacter).